Here is a 228-residue protein sequence, read N- to C-terminus: Phosphoribosylformylglycinamidine synthase subunit PurQ (228 aa).

One can recognise a Glutamine amidotransferase type-1 domain in the interval 2–228 (TVVVVQFGGS…DGKGILQAFG (227 aa)). Residue Cys88 is the Nucleophile of the active site. Catalysis depends on residues His205 and Glu207.

Part of the FGAM synthase complex composed of 1 PurL, 1 PurQ and 2 PurS subunits.

The protein localises to the cytoplasm. It catalyses the reaction N(2)-formyl-N(1)-(5-phospho-beta-D-ribosyl)glycinamide + L-glutamine + ATP + H2O = 2-formamido-N(1)-(5-O-phospho-beta-D-ribosyl)acetamidine + L-glutamate + ADP + phosphate + H(+). The catalysed reaction is L-glutamine + H2O = L-glutamate + NH4(+). Its pathway is purine metabolism; IMP biosynthesis via de novo pathway; 5-amino-1-(5-phospho-D-ribosyl)imidazole from N(2)-formyl-N(1)-(5-phospho-D-ribosyl)glycinamide: step 1/2. Part of the phosphoribosylformylglycinamidine synthase complex involved in the purines biosynthetic pathway. Catalyzes the ATP-dependent conversion of formylglycinamide ribonucleotide (FGAR) and glutamine to yield formylglycinamidine ribonucleotide (FGAM) and glutamate. The FGAM synthase complex is composed of three subunits. PurQ produces an ammonia molecule by converting glutamine to glutamate. PurL transfers the ammonia molecule to FGAR to form FGAM in an ATP-dependent manner. PurS interacts with PurQ and PurL and is thought to assist in the transfer of the ammonia molecule from PurQ to PurL. The chain is Phosphoribosylformylglycinamidine synthase subunit PurQ from Haloquadratum walsbyi (strain DSM 16790 / HBSQ001).